Here is a 317-residue protein sequence, read N- to C-terminus: 2,3-dihydroxyphenylpropionate/2,3-dihydroxicinnamic acid 1,2-dioxygenase 2 (317 aa).

H115 serves as the catalytic Proton donor. Catalysis depends on H179, which acts as the Proton acceptor.

Belongs to the LigB/MhpB extradiol dioxygenase family. As to quaternary structure, homotetramer. Fe(2+) is required as a cofactor.

The enzyme catalyses 3-(2,3-dihydroxyphenyl)propanoate + O2 = (2Z,4E)-2-hydroxy-6-oxonona-2,4-dienedioate + H(+). The catalysed reaction is (2E)-3-(2,3-dihydroxyphenyl)prop-2-enoate + O2 = (2Z,4E,7E)-2-hydroxy-6-oxonona-2,4,7-trienedioate + H(+). The protein operates within aromatic compound metabolism; 3-phenylpropanoate degradation. Its function is as follows. Catalyzes the non-heme iron(II)-dependent oxidative cleavage of 2,3-dihydroxyphenylpropionic acid and 2,3-dihydroxicinnamic acid into 2-hydroxy-6-ketononadienedioate and 2-hydroxy-6-ketononatrienedioate, respectively. The sequence is that of 2,3-dihydroxyphenylpropionate/2,3-dihydroxicinnamic acid 1,2-dioxygenase 2 from Dechloromonas aromatica (strain RCB).